The following is a 224-amino-acid chain: Ribose-5-phosphate isomerase A (224 aa).

Residues 26 to 29 (TGST), 81 to 84 (DGAD), and 94 to 97 (KGGG) contribute to the substrate site. Catalysis depends on Glu-103, which acts as the Proton acceptor. A substrate-binding site is contributed by Lys-121.

It belongs to the ribose 5-phosphate isomerase family. As to quaternary structure, homodimer.

The enzyme catalyses aldehydo-D-ribose 5-phosphate = D-ribulose 5-phosphate. It functions in the pathway carbohydrate degradation; pentose phosphate pathway; D-ribose 5-phosphate from D-ribulose 5-phosphate (non-oxidative stage): step 1/1. Catalyzes the reversible conversion of ribose-5-phosphate to ribulose 5-phosphate. This chain is Ribose-5-phosphate isomerase A, found in Listeria innocua serovar 6a (strain ATCC BAA-680 / CLIP 11262).